We begin with the raw amino-acid sequence, 280 residues long: Urease accessory protein UreD 1 (280 aa).

This sequence belongs to the UreD family. In terms of assembly, ureD, UreF and UreG form a complex that acts as a GTP-hydrolysis-dependent molecular chaperone, activating the urease apoprotein by helping to assemble the nickel containing metallocenter of UreC. The UreE protein probably delivers the nickel.

It is found in the cytoplasm. Required for maturation of urease via the functional incorporation of the urease nickel metallocenter. This Brucella canis (strain ATCC 23365 / NCTC 10854 / RM-666) protein is Urease accessory protein UreD 1.